The sequence spans 241 residues: Spheroidene monooxygenase (241 aa).

Belongs to the CrtA family. It depends on heme as a cofactor.

It carries out the reaction spheroidene + 4 reduced [2Fe-2S]-[ferredoxin] + 2 O2 + 4 H(+) = spheroiden-2-one + 4 oxidized [2Fe-2S]-[ferredoxin] + 3 H2O. The catalysed reaction is spirilloxanthin + 4 reduced [2Fe-2S]-[ferredoxin] + 2 O2 + 4 H(+) = 2-oxospirilloxanthin + 4 oxidized [2Fe-2S]-[ferredoxin] + 3 H2O. The enzyme catalyses 2-oxospirilloxanthin + 4 reduced [2Fe-2S]-[ferredoxin] + 2 O2 + 4 H(+) = 2,2'-dioxospirilloxanthin + 4 oxidized [2Fe-2S]-[ferredoxin] + 3 H2O. It catalyses the reaction spheroidene + 2 reduced [2Fe-2S]-[ferredoxin] + O2 + 2 H(+) = 2-hydroxyspheroidene + 2 oxidized [2Fe-2S]-[ferredoxin] + H2O. It carries out the reaction 2-hydroxyspheroidene + 2 reduced [2Fe-2S]-[ferredoxin] + O2 + 2 H(+) = 2,2-dihydroxyspheroidene + 2 oxidized [2Fe-2S]-[ferredoxin] + H2O. The catalysed reaction is 2,2-dihydroxyspheroidene = spheroiden-2-one + H2O. The enzyme catalyses spirilloxanthin + 2 reduced [2Fe-2S]-[ferredoxin] + O2 + 2 H(+) = 2-hydroxyspirilloxanthin + 2 oxidized [2Fe-2S]-[ferredoxin] + H2O. It catalyses the reaction 2-hydroxyspirilloxanthin + 2 reduced [2Fe-2S]-[ferredoxin] + O2 + 2 H(+) = 2,2-dihydroxyspirilloxanthin + 2 oxidized [2Fe-2S]-[ferredoxin] + H2O. It carries out the reaction 2,2-dihydroxyspirilloxanthin = 2-oxospirilloxanthin + H2O. The catalysed reaction is 2-oxospirilloxanthin + 2 reduced [2Fe-2S]-[ferredoxin] + O2 + 2 H(+) = 2'-hydroxy-2-oxospirilloxanthin + 2 oxidized [2Fe-2S]-[ferredoxin] + H2O. The enzyme catalyses 2'-hydroxy-2-oxospirilloxanthin + 2 reduced [2Fe-2S]-[ferredoxin] + O2 + 2 H(+) = 2',2'-dihydroxy-2-oxospirilloxanthin + 2 oxidized [2Fe-2S]-[ferredoxin] + H2O. It catalyses the reaction 2',2'-dihydroxy-2-oxospirilloxanthin = 2,2'-dioxospirilloxanthin + H2O. It participates in carotenoid biosynthesis; spheroidene biosynthesis. Involved in the biosynthesis of the carotenoid spheroidene. Catalyzes the introduction of one keto group at the C-2 position of spheroidene. In vitro, can also catalyze the introduction of two keto groups at the C-2 and C-2' positions of spirilloxanthin, but spirilloxanthin biosynthesis pathway is not present in R.capsulatus. This Rhodobacter capsulatus (strain ATCC BAA-309 / NBRC 16581 / SB1003) protein is Spheroidene monooxygenase.